The following is a 377-amino-acid chain: 23S rRNA (uracil(747)-C(5))-methyltransferase RlmC (377 aa).

Residues Cys3, Cys11, Cys14, and Cys87 each contribute to the [4Fe-4S] cluster site. S-adenosyl-L-methionine contacts are provided by Gln212, Phe241, Glu262, and Asn307. Cys334 functions as the Nucleophile in the catalytic mechanism.

This sequence belongs to the class I-like SAM-binding methyltransferase superfamily. RNA M5U methyltransferase family. RlmC subfamily.

It catalyses the reaction uridine(747) in 23S rRNA + S-adenosyl-L-methionine = 5-methyluridine(747) in 23S rRNA + S-adenosyl-L-homocysteine + H(+). Catalyzes the formation of 5-methyl-uridine at position 747 (m5U747) in 23S rRNA. This Edwardsiella ictaluri (strain 93-146) protein is 23S rRNA (uracil(747)-C(5))-methyltransferase RlmC.